The primary structure comprises 417 residues: Dibenzothiophene monooxygenase (417 aa).

Residues Y96, N129 to N134, K159 to S163, R282, A369 to R370, and H391 contribute to the FMN site. The interval S131–K142 is lid loop.

This sequence belongs to the DszC flavin monooxygenase family. Homotetramer. Homodimer. It depends on FAD as a cofactor. The cofactor is NADH.

It is found in the cytoplasm. The catalysed reaction is dibenzothiophene + 2 FMNH2 + 2 O2 = dibenzothiophene 5,5-dioxide + 2 FMN + 2 H2O + 2 H(+). It carries out the reaction dibenzothiophene + FMNH2 + O2 = dibenzothiophene 5-oxide + FMN + H2O + H(+). The enzyme catalyses dibenzothiophene 5-oxide + FMNH2 + O2 = dibenzothiophene 5,5-dioxide + FMN + H2O + H(+). The protein operates within sulfur metabolism; dibenzothiophene degradation. Catalyzes the first step of the '4S' desulfurization pathway that removes covalently bound sulfur from dibenzothiophene (DBT) without breaking carbon-carbon bonds. Sulfur dioxygenase which converts DBT to DBT-sulfone (DBTO2 or DBT 5,5-dioxide) in a stepwise manner. In DBTO (dibenzothiophene-5-oxide) was reported not to be a substrate, in it is reported to be a substrate. Can also use benzyl sulfide and benzyl sulfoxide as substrates, although benzyl sulfoxide is a poor substrate. The pathway substrate specificity has been augmented using mutagenesis, however no mutations allowed use of alkylated thiophenes. The chain is Dibenzothiophene monooxygenase from Rhodococcus qingshengii.